The primary structure comprises 473 residues: Trehalose-6-phosphate synthase (473 aa).

Arg10 lines the D-glucose 6-phosphate pocket. 21–22 provides a ligand contact to UDP-alpha-D-glucose; the sequence is GG. The D-glucose 6-phosphate site is built by Tyr76 and Asp130. UDP-alpha-D-glucose-binding residues include Arg262 and Lys267. A D-glucose 6-phosphate-binding site is contributed by Arg300. UDP-alpha-D-glucose contacts are provided by residues Phe339 and 365 to 369; that span reads LVAKE.

This sequence belongs to the glycosyltransferase 20 family. As to quaternary structure, homotetramer.

It catalyses the reaction D-glucose 6-phosphate + UDP-alpha-D-glucose = alpha,alpha-trehalose 6-phosphate + UDP + H(+). It participates in glycan biosynthesis; trehalose biosynthesis. Its function is as follows. Probably involved in the osmoprotection via the biosynthesis of trehalose. Catalyzes the transfer of glucose from UDP-alpha-D-glucose (UDP-Glc) to D-glucose 6-phosphate (Glc-6-P) to form trehalose-6-phosphate. Acts with retention of the anomeric configuration of the UDP-sugar donor. The polypeptide is Trehalose-6-phosphate synthase (otsA) (Salmonella arizonae (strain ATCC BAA-731 / CDC346-86 / RSK2980)).